Reading from the N-terminus, the 757-residue chain is RNA-directed RNA polymerase catalytic subunit (757 aa).

Positions 50 to 82 (SEKGKWTTNTETGAPQLNPIDGPLPEDNEPSGY) are disordered. Polar residues predominate over residues 55–64 (WTTNTETGAP). 2 short sequence motifs (nuclear localization signal) span residues 187 to 195 (RKRRVRDNM) and 203 to 216 (RTIGKKKQRVNKRS). A promoter-binding site region spans residues 249 to 256 (RGFVYFVE). The RdRp catalytic domain maps to 286–483 (VRKMMTNSQD…GINMSKKKSY (198 aa)).

Belongs to the influenza viruses polymerase PB1 family. In terms of assembly, influenza RNA polymerase is composed of three subunits: PB1, PB2 and PA. Interacts (via N-terminus) with PA (via C-terminus). Interacts (via C-terminus) with PB2 (via N-terminus); this interaction is essential for transcription initiation. Phosphorylated by host PRKCA.

It is found in the host nucleus. The protein localises to the host cytoplasm. The enzyme catalyses RNA(n) + a ribonucleoside 5'-triphosphate = RNA(n+1) + diphosphate. Functionally, RNA-dependent RNA polymerase which is responsible for replication and transcription of virus RNA segments. The transcription of viral mRNAs occurs by a unique mechanism called cap-snatching. 5' methylated caps of cellular mRNAs are cleaved after 10-13 nucleotides by PA. In turn, these short capped RNAs are used as primers by PB1 for transcription of viral mRNAs. During virus replication, PB1 initiates RNA synthesis and copy vRNA into complementary RNA (cRNA) which in turn serves as a template for the production of more vRNAs. In Aves (whales), this protein is RNA-directed RNA polymerase catalytic subunit.